We begin with the raw amino-acid sequence, 2370 residues long: MMEGSNGFSSSLAGLSSSRSSLRLLTHLLSLPPPNRDARRHSGWYRSPPTLPVNVYLNEQFDNLCLAALRYPGCKLYPSVYTLFPDVSPFKIPQSIPAFAHLVQRQGLRRQGNPTTNIYGNGNEVTTDVGANGMSLPIAVGDMPTASSSEAPLGSNKGGSSTSPKSTSNGNVVRGSRYSKWWEPAAARALDRALDHAVDATDAVAGAASKGIKAGATKLSNKLAGSQTTALLALPGNIAGGAPSATVNANNTSISSQALLPSVNPYPSTPAVSLPNPDAPTQVGPAADRQWLVDTIPWSETTPPLTVFSGPKALTPGTYPPTIEPNTGVYPLPAALCVSHPESVFTTAYNAHAYFNCGFDVTVVVNASQFHGGSLIVLAMAEGLGDITPADSSTWFNFPHAIINLANSNSATLKLPYIGVTPNTSTEGLHNYWTILFAPLTPLAVPTGSPTSVKVSLFVSPIDSAFYGLRFPIPFPTPQHWKTRAVPGAGSYGSVVAGQEIPLVGYAPAAPPRDYLPGRVRNWLEYAARHSWERNLPWTAADEVGDQLVSYPIQPETLANTQTNTAFVLSLFSQWRGSLQISLIFTGPAQCYGRLLLAYTPPSANPPTTIEEANNGTYDVWDVNGDSTYTFTIPFCSQAYWKTVDIGTSSGLVSNNGYFTIFVMNPLVTPGPSPPSATVAAFLHVADDFDVRLPQCPALGFQSGADGAEVQPAPTSDLSDGNPTTDPAPRDNFDYPHHPVDPSTDLAFYFSQYRWFGLNEDLTPLNVTGGLFYHVSLNPVNFQQNSLLSVLGAFTYVYANLSLNINVSAPLQACTFYIFYAPPGASVPSTQTLAELSFFTHTATPLNLAAPTNITVSIPYASPQSVLCTSFGGFGLQNGGDPGNLHSNTWGTLILYVDLPQSDSVSVSAYISFRDFEAYVPRQTPGVGPIPTSTSIVRVARPTPKPRTVRRQGGTLADLILTPESRCFIVAHTTAPYYSILLVNPDEEYAISMFTHGDESILRYSSRGGTRLAPTAPAFFLCAAASVDTILPYPISQSHLWLSDLTGIPLRAVPPLTLFLSAGAALCAGAQTLIAVAQGGSAPDTPPTPNRALFRRQGLGDLPDAAKGLSAALENVAKVAGDADIATSSQAIASSINSLSNSIDGATTFMQNFFSGLAPKNPTSPLQHLFAKLIKWVTKIIGSLIIICNNPTPSALIGVSLMLCGDLAEDITEFFSNLGNPLAAVFYRCARALGLSPTPQSAAQAAGGRQGVRDYNDIMSALRNTDWFFEKIMSHIKNLLEWLGVLVKDDPRTKLNSQHEKILELYTDSVTASSTPPSELSADAIRSNLDLAKQLLTLSHAANSVTHIQLCTRAITNYSTALSAISLVGTPGTRPEPLVVYLYGPPGTGKSLLASLLASTLAQALSGDPNNYYSPSSPDCKFYDGYSGQPVHYIDDIGQDPDGADWADFVNIVSSAPFIVPMADVNDKGRFYTSRVVIVTSNFPGPNPRSARCVAALERRLHIRLNVTARDGAAFSAAAALKPSEPLAATRYCKFSNPLTQFSMFNLAVDYKSIVLPNTPLSCFDELIDFILGSLRDRASVNSLLSGMVRTDVARQGGNADAPAPSAAPLPSVLPSVPSQDPFVRAVNENRPVSFLSKIWSWRAPIFAASSFLSLIAATLTIVRCLRDLRSTQGAYSGTPVPKPRKKDLPKQPVYSGPVRRQGFDPAVMKIMGNVDSFVTLSGSKPIWTMSCLWIGGRNLIAPSHAFVSDDYEITHIRVGSRTLDVSRVTRVDDGELSLISVPDGPEHKSLIRYIRSASPKSGILASKFSDTPVFVSFWNGKPHSTPLPGVVDEKDSFTYRCSSFQGLCGSPMIATDPGGLGILGIHVAGVAGYNGFSARLTPERVQAFLSNLATPQSVLHFHPPMGPPAHVSRRSRLHPSPAFGAFPITKEPAALSRKDPRLPEGTDLDAITLAKHDKGDIATPWPCMEEAADWYFSQLPDSLPVLSQEDAIRGLDHMDAIDLSQSPGYPWTTQGRSRRSLFDEDGNPVPELQKAIDSVWDGGSYIYQSFLKDELRPTAKARAGKTRIVEAAPIQAIVVGRRLLGSLINHLQGNPLQYGSAVGCNPDIHWTQIFHSLTPFSNVWSIDYSCFDATIPSVLLSAIASRIASRSDQPGRVLDYLSYTTTSYHVYDSLWYTMVGGNPSGCVGTSILNTIANNIAIISAMMYCNKFDPRDPPVLYCYGDDLIWGSNQDFHPRELQAFYQKFTNFVVTPADKASDFPDSSSIYDITFLKRYFVPDDIHPHLIHPVMDEATLTNSIMWLRGGEFEEVLRSLETLAFHSGPNNYSTWCEKIKAKIRENGCDATFTPYSVLQRGWVSTCMTGPYPLTG.

Gly-112 carries the N-myristoyl glycine; by host lipid modification. 2 disordered regions span residues 140 to 173 and 704 to 736; these read VGDM…GNVV and GADG…FDYP. Residues 154–171 are compositionally biased toward low complexity; it reads GSNKGGSSTSPKSTSNGN. The segment covering 713–725 has biased composition (polar residues); it reads APTSDLSDGNPTT. In terms of domain architecture, SF3 helicase spans 1358 to 1522; it reads YSTALSAISL…AAFSAAAALK (165 aa). Position 1384–1391 (1384–1391) interacts with ATP; it reads GPPGTGKS. A lipid anchor (N-myristoyl glycine; by host) is attached at Gly-1597. A helical membrane pass occupies residues 1646–1666; it reads IFAASSFLSLIAATLTIVRCL. A disordered region spans residues 1674–1696; sequence GAYSGTPVPKPRKKDLPKQPVYS. Tyr-1676 carries the O-(5'-phospho-RNA)-tyrosine modification. In terms of domain architecture, Peptidase C3 spans 1697-1886; the sequence is GPVRRQGFDP…FSARLTPERV (190 aa). Catalysis depends on for protease 3C activity residues His-1745, Glu-1776, and Cys-1849. The span at 2007-2016 shows a compositional bias: polar residues; the sequence is SPGYPWTTQG. The interval 2007–2026 is disordered; that stretch reads SPGYPWTTQGRSRRSLFDED. Positions 2122–2239 constitute a RdRp catalytic domain; sequence SNVWSIDYSC…GSNQDFHPRE (118 aa). Active-site for RdRp activity residues include Asp-2128 and Asp-2225.

As to quaternary structure, interacts with capsid protein VP1. Interacts with capsid protein VP3. Interacts with capsid protein VP0. Interacts with capsid protein VP3. In terms of assembly, interacts with capsid protein VP0. Interacts with capsid protein VP1. As to quaternary structure, homodimer. Interacts with protein 2B. Interacts with protein 2C. Homodimer. Interacts with host ABCD3. Interacts with protein 2A. Interacts with host ACBD3. In terms of assembly, homodimer. Interacts with host ABCD3. Interacts with protein 2A. Interacts with protein 3A. Interacts with protein 3C. Interacts with host ACBD3. As to quaternary structure, homodimer. Interacts with host ABCD3 (via GOLD domain) and PI4KB; these interactions allow the formation of a viral protein/ACBD3/PI4KB complex in order to synthesize PI4P at the viral RNA replication sites. Interacts with protein 2C. Interacts with protein 3C. Protein 3C: Interacts with protein 2A. Protein 3C: Interacts with protein 2C. Specific enzymatic cleavages by the viral protease in vivo yield a variety of precursors and mature proteins. The leader protein-VP0 junction is cleaved by 3C proteinase. The VP1/2A junction is cleaved by the protein 3CD in association with protein 2A. In terms of processing, uridylylated by the polymerase and is covalently linked to the 5'-end of genomic RNA. This uridylylated form acts as a nucleotide-peptide primer for the polymerase.

Its subcellular location is the virion. The protein resides in the host cytoplasm. It is found in the host cytoplasmic vesicle membrane. The protein localises to the host Golgi apparatus membrane. The enzyme catalyses RNA(n) + a ribonucleoside 5'-triphosphate = RNA(n+1) + diphosphate. It carries out the reaction Selective cleavage of Gln-|-Gly bond in the poliovirus polyprotein. In other picornavirus reactions Glu may be substituted for Gln, and Ser or Thr for Gly.. It catalyses the reaction ATP + H2O = ADP + phosphate + H(+). Functionally, required for viral RNA replication and viral RNA encapsidation. Does not have any proteolytic activity. Forms an icosahedral capsid of pseudo T=3 symmetry with capsid proteins VP0 and VP3. Together they form an icosahedral capsid composed of 60 copies of each VP0, VP1, and VP3. All the three latter proteins contain a beta-sheet structure called beta-barrel jelly roll. In terms of biological role, forms an icosahedral capsid of pseudo T=3 symmetry with capsid proteins VP1 and VP3. Together they form an icosahedral capsid composed of 60 copies of each VP0, VP1, and VP3. All the three latter proteins contain a beta-sheet structure called beta-barrel jelly roll. Its function is as follows. Forms an icosahedral capsid of pseudo T=3 symmetry with capsid proteins VP0 and VP1. Together they form an icosahedral capsid composed of 60 copies of each VP0, VP1, and VP3. All the three latter proteins contain a beta-sheet structure called beta-barrel jelly roll. Functionally, required for viral RNA replication. Does not have any proteolytic activity. Affects membrane integrity and causes an increase in membrane permeability. In terms of biological role, induces and associates with structural rearrangements of intracellular membranes. Displays RNA-binding, nucleotide binding and NTPase activities. May play a role in virion morphogenesis and viral RNA encapsidation by interacting with the capsid protein VP3. Its function is as follows. Serves as membrane anchor via its hydrophobic domain. Plays an essential role in viral RNA replication by recruiting PI4KB at the viral replication sites, thereby allowing the formation of rearranged membranous structures where viral replication takes place. Functionally, forms a primer, VPg-pU, which is utilized by the polymerase for the initiation of RNA chains. Cysteine protease that generates mature viral proteins from the precursor polyprotein. In addition to its proteolytic activity, it binds to viral RNA, and thus influences viral genome replication. RNA and substrate cooperatively bind to the protease. In terms of biological role, replicates the genomic and antigenomic RNAs by recognizing replications specific signals. Performs VPg uridylylation. This Homo sapiens (Human) protein is Genome polyprotein.